The primary structure comprises 341 residues: NADH-quinone oxidoreductase subunit H (341 aa).

8 helical membrane passes run 38–58 (PSVV…KLLV), 70–90 (ILFI…WAVI), 115–135 (IGVL…IVAG), 161–181 (MGLI…GEMV), 187–207 (MPFW…ISLL), 239–259 (LFFL…TIFF), 275–295 (IPGL…FVWT), and 314–334 (VFLP…LFTG).

It belongs to the complex I subunit 1 family. In terms of assembly, NDH-1 is composed of 14 different subunits. Subunits NuoA, H, J, K, L, M, N constitute the membrane sector of the complex.

The protein resides in the cell membrane. It catalyses the reaction a quinone + NADH + 5 H(+)(in) = a quinol + NAD(+) + 4 H(+)(out). Functionally, NDH-1 shuttles electrons from NADH, via FMN and iron-sulfur (Fe-S) centers, to quinones in the respiratory chain. The immediate electron acceptor for the enzyme in this species is believed to be ubiquinone. Couples the redox reaction to proton translocation (for every two electrons transferred, four hydrogen ions are translocated across the cytoplasmic membrane), and thus conserves the redox energy in a proton gradient. This subunit may bind ubiquinone. The chain is NADH-quinone oxidoreductase subunit H from Wolbachia sp. subsp. Brugia malayi (strain TRS).